We begin with the raw amino-acid sequence, 1042 residues long: Glutamate dehydrogenase 2 (1042 aa).

K596 is a catalytic residue. R763 carries the ADP-ribosylarginine; by Legionella Lart1 modification.

Belongs to the Glu/Leu/Phe/Val dehydrogenases family. As to quaternary structure, homodimer. In terms of processing, (Microbial infection) ADP-ribosylated at Arg-763 by the Legionella pneumophila effector Lart1, which inhibits the glutamate dehydrogenase activity. Amoeba are natural hosts of Legionella, and ADP-ribosylation by Lart1 may promote Legionella parasitism.

It localises to the cytoplasm. The catalysed reaction is L-glutamate + NAD(+) + H2O = 2-oxoglutarate + NH4(+) + NADH + H(+). Its activity is regulated as follows. Activity is stimulated by AMP. With respect to regulation, (Microbial infection) Inhibited by ADP-ribosylation. In Dictyostelium discoideum (Social amoeba), this protein is Glutamate dehydrogenase 2 (glud2).